Here is a 266-residue protein sequence, read N- to C-terminus: Phosphatidylglycerol--prolipoprotein diacylglyceryl transferase (266 aa).

A run of 7 helical transmembrane segments spans residues 17 to 37, 56 to 76, 92 to 112, 120 to 140, 171 to 191, 199 to 219, and 233 to 253; these read LKIHWYGLMYLIGIGGAWLLA, LVFWVACGVILGGRLGYVLFY, WKGGMSFHGGLLGVMLAVWWF, FFQLMDFIAPLVPIGLGAGRI, PSQLYQFALEGVALFVILWLF, ASVSGLFVLCYGIFRFVVEFV, and WLTMGQVLCVPMVLAGIALMV. Arg139 is a binding site for a 1,2-diacyl-sn-glycero-3-phospho-(1'-sn-glycerol).

The protein belongs to the Lgt family.

Its subcellular location is the cell inner membrane. It carries out the reaction L-cysteinyl-[prolipoprotein] + a 1,2-diacyl-sn-glycero-3-phospho-(1'-sn-glycerol) = an S-1,2-diacyl-sn-glyceryl-L-cysteinyl-[prolipoprotein] + sn-glycerol 1-phosphate + H(+). It functions in the pathway protein modification; lipoprotein biosynthesis (diacylglyceryl transfer). Functionally, catalyzes the transfer of the diacylglyceryl group from phosphatidylglycerol to the sulfhydryl group of the N-terminal cysteine of a prolipoprotein, the first step in the formation of mature lipoproteins. The sequence is that of Phosphatidylglycerol--prolipoprotein diacylglyceryl transferase from Pseudomonas aeruginosa (strain UCBPP-PA14).